A 65-amino-acid chain; its full sequence is Putative potassium channel toxin Ts21 (65 aa).

Residues 1-25 (MNKVYLVAILVLSVLLVANVSPIEG) form the signal peptide. 3 cysteine pairs are disulfide-bonded: C31–C53, C38–C61, and C42–C63.

The protein belongs to the short scorpion toxin superfamily. Potassium channel inhibitor family. Alpha-KTx 11 subfamily. In terms of tissue distribution, expressed by the venom gland.

It localises to the secreted. In terms of biological role, this recombinant toxin inhibits the mammalian voltage-gated potassium channels Kv1.3/KCNA3 in vitro with an IC(50) of 26.40 nM. The protein is Putative potassium channel toxin Ts21 of Tityus serrulatus (Brazilian scorpion).